A 626-amino-acid chain; its full sequence is Chaperone protein HtpG (626 aa).

An a; substrate-binding region spans residues 1 to 341 (MAKREFKAES…SEDLSLNISR (341 aa)). The tract at residues 342–552 (EMLQHDRQLK…DGEVTIEMEK (211 aa)) is b. Positions 553-626 (ILNAMPDNQH…FTNDICKVMA (74 aa)) are c.

The protein belongs to the heat shock protein 90 family. As to quaternary structure, homodimer.

Its subcellular location is the cytoplasm. Molecular chaperone. Has ATPase activity. This Bacillus licheniformis (strain ATCC 14580 / DSM 13 / JCM 2505 / CCUG 7422 / NBRC 12200 / NCIMB 9375 / NCTC 10341 / NRRL NRS-1264 / Gibson 46) protein is Chaperone protein HtpG.